We begin with the raw amino-acid sequence, 132 residues long: Small ribosomal subunit protein uS8 (132 aa).

It belongs to the universal ribosomal protein uS8 family. Part of the 30S ribosomal subunit. Contacts proteins S5 and S12.

In terms of biological role, one of the primary rRNA binding proteins, it binds directly to 16S rRNA central domain where it helps coordinate assembly of the platform of the 30S subunit. This Paracoccus denitrificans (strain Pd 1222) protein is Small ribosomal subunit protein uS8.